A 298-amino-acid polypeptide reads, in one-letter code: Multifunctional dioxygenase ausE (298 aa).

Substrate is bound by residues arginine 72 and glutamine 127. Residues histidine 130 and aspartate 132 each coordinate Fe cation. Threonine 167 is a binding site for substrate. Histidine 214 contacts Fe cation. A substrate-binding site is contributed by arginine 226.

It belongs to the PhyH family. As to quaternary structure, homodimer. Fe cation is required as a cofactor.

It carries out the reaction preaustinoid A1 + 2-oxoglutarate + O2 = preaustinoid A2 + succinate + CO2 + H2O. It catalyses the reaction preaustinoid A2 + 2-oxoglutarate + O2 = preaustinoid A3 + succinate + CO2 + H2O. The catalysed reaction is berkeleyone A + 2-oxoglutarate + O2 = preaustinoid A + succinate + CO2 + H2O. It functions in the pathway secondary metabolite biosynthesis; terpenoid biosynthesis. In terms of biological role, multifunctional dioxygenase; part of the gene cluster B that mediates the biosynthesis of austinol and dehydroaustinol, two fungal meroterpenoids. The first step of the pathway is the synthesis of 3,5-dimethylorsellinic acid by the polyketide synthase ausA. 3,5-dimethylorsellinic acid is then prenylated by the polyprenyl transferase ausN. Further epoxidation by the FAD-dependent monooxygenase ausM and cyclization by the probable terpene cyclase ausL lead to the formation of protoaustinoid A. Protoaustinoid A is then oxidized to spiro-lactone preaustinoid A3 by the combined action of the FAD-binding monooxygenases ausB and ausC, and the dioxygenase ausE. Acid-catalyzed keto-rearrangement and ring contraction of the tetraketide portion of preaustinoid A3 by ausJ lead to the formation of preaustinoid A4. The aldo-keto reductase ausK, with the help of ausH, is involved in the next step by transforming preaustinoid A4 into isoaustinone which is in turn hydroxylated by the P450 monooxygenase ausI to form austinolide. Finally, the cytochrome P450 monooxygenase ausG modifies austinolide to austinol. Austinol can be further modified to dehydroaustinol which forms a diffusible complex with diorcinol that initiates conidiation. Due to genetic rearrangements of the clusters and the subsequent loss of some enzymes, the end products of the Emericella nidulans austinoid biosynthesis clusters are austinol and dehydroaustinol, even if additional enzymes, such as the O-acetyltransferase ausQ and the cytochrome P450 monooxygenase ausR are still functional. In Emericella nidulans (strain FGSC A4 / ATCC 38163 / CBS 112.46 / NRRL 194 / M139) (Aspergillus nidulans), this protein is Multifunctional dioxygenase ausE.